The chain runs to 521 residues: Acidic amino acid decarboxylase GADL1 (521 aa).

A compositionally biased stretch (basic and acidic residues) spans 1–12 (MSLLPDRERAPD). Residues 1-20 (MSLLPDRERAPDGDISPQEM) are disordered. Position 333 is an N6-(pyridoxal phosphate)lysine (lysine 333).

This sequence belongs to the group II decarboxylase family. In terms of assembly, homodimer. Pyridoxal 5'-phosphate is required as a cofactor. Expressed at highest levels in skeletal muscles. Also detected heart, spleen and rumen.

It catalyses the reaction L-aspartate + H(+) = beta-alanine + CO2. The enzyme catalyses 3-sulfino-L-alanine + H(+) = hypotaurine + CO2. It carries out the reaction L-cysteate + H(+) = taurine + CO2. Catalyzes the decarboxylation of L-aspartate, 3-sulfino-L-alanine (cysteine sulfinic acid), and L-cysteate to beta-alanine, hypotaurine and taurine, respectively. The preferred substrate is L-aspartate. Does not exhibit any decarboxylation activity toward glutamate. This is Acidic amino acid decarboxylase GADL1 (GADL1) from Bos taurus (Bovine).